Here is a 129-residue protein sequence, read N- to C-terminus: Small ribosomal subunit protein uS11 (129 aa).

This sequence belongs to the universal ribosomal protein uS11 family. As to quaternary structure, part of the 30S ribosomal subunit. Interacts with proteins S7 and S18. Binds to IF-3.

Located on the platform of the 30S subunit, it bridges several disparate RNA helices of the 16S rRNA. Forms part of the Shine-Dalgarno cleft in the 70S ribosome. In Cereibacter sphaeroides (strain ATCC 17025 / ATH 2.4.3) (Rhodobacter sphaeroides), this protein is Small ribosomal subunit protein uS11.